The following is a 417-amino-acid chain: NADH-quinone oxidoreductase subunit D (417 aa).

Belongs to the complex I 49 kDa subunit family. NDH-1 is composed of 14 different subunits. Subunits NuoB, C, D, E, F, and G constitute the peripheral sector of the complex.

It localises to the cell inner membrane. The enzyme catalyses a quinone + NADH + 5 H(+)(in) = a quinol + NAD(+) + 4 H(+)(out). In terms of biological role, NDH-1 shuttles electrons from NADH, via FMN and iron-sulfur (Fe-S) centers, to quinones in the respiratory chain. The immediate electron acceptor for the enzyme in this species is believed to be ubiquinone. Couples the redox reaction to proton translocation (for every two electrons transferred, four hydrogen ions are translocated across the cytoplasmic membrane), and thus conserves the redox energy in a proton gradient. The polypeptide is NADH-quinone oxidoreductase subunit D (Nitrosococcus oceani (strain ATCC 19707 / BCRC 17464 / JCM 30415 / NCIMB 11848 / C-107)).